A 319-amino-acid polypeptide reads, in one-letter code: Putative G-protein coupled receptor B0244.7 (319 aa).

The N-linked (GlcNAc...) asparagine glycan is linked to asparagine 28. 6 consecutive transmembrane segments (helical) span residues 49–69 (AIFI…IYIF), 107–127 (LPVI…FIIF), 131–151 (SFLS…IAVV), 166–186 (VLLI…CGIV), 206–226 (GPVL…CLVI), and 261–281 (LFAG…SAII).

It belongs to the G-protein coupled receptor 1 family. B0244 subfamily.

It localises to the cell membrane. This Caenorhabditis elegans protein is Putative G-protein coupled receptor B0244.7.